The chain runs to 321 residues: 37 kDa cell surface protein (321 aa).

It is found in the secreted. Its subcellular location is the cell wall. In Candida albicans (Yeast), this protein is 37 kDa cell surface protein (CSP37).